A 717-amino-acid chain; its full sequence is Ribosomal RNA large subunit methyltransferase K/L (717 aa).

One can recognise a THUMP domain in the interval 44 to 155 (DAYKVCIYSY…KQFVNVFLCL (112 aa)).

The protein belongs to the methyltransferase superfamily. RlmKL family.

Its subcellular location is the cytoplasm. It carries out the reaction guanosine(2445) in 23S rRNA + S-adenosyl-L-methionine = N(2)-methylguanosine(2445) in 23S rRNA + S-adenosyl-L-homocysteine + H(+). The enzyme catalyses guanosine(2069) in 23S rRNA + S-adenosyl-L-methionine = N(2)-methylguanosine(2069) in 23S rRNA + S-adenosyl-L-homocysteine + H(+). In terms of biological role, specifically methylates the guanine in position 2445 (m2G2445) and the guanine in position 2069 (m7G2069) of 23S rRNA. This is Ribosomal RNA large subunit methyltransferase K/L from Francisella tularensis subsp. tularensis (strain SCHU S4 / Schu 4).